Consider the following 85-residue polypeptide: MKVTLIAILTCAAALVLHTTAAEELEAESQLMEVGMPDTELAAVDEERLFECSVSCEIEKEGNKDCKKKKCKGGWKCKFNMCVKV.

An N-terminal signal peptide occupies residues 1–22 (MKVTLIAILTCAAALVLHTTAA). Positions 23-48 (EELEAESQLMEVGMPDTELAAVDEER) are excised as a propeptide. 3 cysteine pairs are disulfide-bonded: C52–C66, C56–C77, and C71–C82.

It belongs to the neurotoxin 12 (Hwtx-2) family. 02 (Hwtx-2) subfamily. Monomer. As to expression, expressed by the venom gland.

Its subcellular location is the secreted. In terms of biological role, neurotoxin active on both insects and mammals. The protein is U4-theraphotoxin-Hhn1a of Cyriopagopus hainanus (Chinese bird spider).